Reading from the N-terminus, the 247-residue chain is Probable transcriptional regulatory protein Asuc_1803 (247 aa).

Belongs to the TACO1 family.

Its subcellular location is the cytoplasm. The protein is Probable transcriptional regulatory protein Asuc_1803 of Actinobacillus succinogenes (strain ATCC 55618 / DSM 22257 / CCUG 43843 / 130Z).